Consider the following 962-residue polypeptide: MTKQTLTQLEQHDLFLRRHIGPDSSQQQEMLNYVGAESLDDLTAQIVPESIRLSQELSIGDSCGEAEGIAYIRGLAKQNQVFKSYIGMGYYGTQVPNVILRNVFENPGWYTAYTPYQPEIAQGRLEAILNFQQVSMDLTGLDLASASLLDEATAAAEAMALAKRVSKAKKANIFFVADDVFPQTLDVVKTRAECFGFEVVVGPAHEAVNHELFGALFQYSNRFGQITDFTDLFAELRAKNVIVTVAADIMALVLLKSPGAMGADVVFGSAQRFGVPMGFGGPHAAFFVARDEHKRSMPGRIIGVSKDTRGNRALRMAMQTREQHIRREKANSNICTAQILLANMASFYAVFHGPQGLKTIASRINRFTDILAAGLQAKGVSLVNNTWFDTISIKGLDVAAVNARALAAEMNLRFDADGIVGVSLDETTIRTDIEALFDVILGAGHGLDVAALDAQIVAQGSQSIPASLVRQDAILSHPTFNRYQSETEMMRYIKRLESKDLALNYSMISLGSCTMKLNAAVEMIPVSWPEFANMHPFCPLDQAKGYTQLIEELSSWLVNVTGYDAVCIQPNSGAQGEYAGLLAIRKYHESRGEAHRNICLIPQSAHGTNPASAQLAGMQVVVTACDKQGNVDLEDLKAKAAEVAENLSCIMITYPSTHGVYEESIREICNIVHQHGGQVYLDGANMNAQVGLTSPGFIGADVSHLNLHKTFAIPHGGGGPGMGPIGVKAHLAPFVAGHVVVKPGRESDNNGAVSAAPYGSAGILPISWMYIKLLGSNGLKKSTQTALLNANYVMKKLSEHYPVLFRGRNDRVAHECIIDLRPIKEASGVTEMDIAKRLNDYGFHAPTMSFPVAGTLMIEPTESESKVELDRFIDAMVSIRAEIAKVEAGEWPADNNPLHNAPHTMADIMDPAFDSRPYSREVAVFPSAAVRTNKFWPTVNRIDDVYGDRNLFCACVPLSDYE.

Position 709 is an N6-(pyridoxal phosphate)lysine (lysine 709).

The protein belongs to the GcvP family. In terms of assembly, the glycine cleavage system is composed of four proteins: P, T, L and H. It depends on pyridoxal 5'-phosphate as a cofactor.

It catalyses the reaction N(6)-[(R)-lipoyl]-L-lysyl-[glycine-cleavage complex H protein] + glycine + H(+) = N(6)-[(R)-S(8)-aminomethyldihydrolipoyl]-L-lysyl-[glycine-cleavage complex H protein] + CO2. In terms of biological role, the glycine cleavage system catalyzes the degradation of glycine. The P protein binds the alpha-amino group of glycine through its pyridoxal phosphate cofactor; CO(2) is released and the remaining methylamine moiety is then transferred to the lipoamide cofactor of the H protein. The protein is Glycine dehydrogenase (decarboxylating) of Shewanella sp. (strain ANA-3).